The sequence spans 154 residues: MQARANARSARRRAREFALQGVYAWLLRGGEGTQDAGEIDAHLRDAEDFSEADAQWFKTLLHGVLREAPVLRERFLPYIDRPLAELSPVEHGILLIGSFELMHHVEVPYKVAINEAVELAKSFGGTDGFKFVNGVLDKLAADVRTAEVQAAPRR.

This sequence belongs to the NusB family.

Functionally, involved in transcription antitermination. Required for transcription of ribosomal RNA (rRNA) genes. Binds specifically to the boxA antiterminator sequence of the ribosomal RNA (rrn) operons. This Bordetella parapertussis (strain 12822 / ATCC BAA-587 / NCTC 13253) protein is Transcription antitermination protein NusB.